The primary structure comprises 228 residues: Phosphatidate cytidylyltransferase (228 aa).

6 helical membrane passes run 31-51 (FVIAILCLKTLFYILMILVGL), 65-85 (INYLLIGLIIIPIPISLLIFL), 93-113 (LVIMLYFCILWSVDTFAMIGG), 131-151 (WTGLITGTVSAGLVSVLVSLI), 165-185 (IYLFIISCILALIAQSSDLFI), and 206-226 (GVLDRFDSIILTAPVFFCINI).

Belongs to the CDS family.

The protein resides in the cell membrane. The catalysed reaction is a 1,2-diacyl-sn-glycero-3-phosphate + CTP + H(+) = a CDP-1,2-diacyl-sn-glycerol + diphosphate. Its pathway is phospholipid metabolism; CDP-diacylglycerol biosynthesis; CDP-diacylglycerol from sn-glycerol 3-phosphate: step 3/3. This is Phosphatidate cytidylyltransferase (cdsA) from Rickettsia prowazekii (strain Madrid E).